We begin with the raw amino-acid sequence, 360 residues long: Membrane-bound lytic murein transglycosylase C (360 aa).

The N-terminal stretch at 1–16 (MKKIFALALIAPLLIS) is a signal peptide. Cys-17 carries the N-palmitoyl cysteine lipid modification. Cys-17 is lipidated: S-diacylglycerol cysteine.

Belongs to the transglycosylase Slt family.

Its subcellular location is the cell outer membrane. The enzyme catalyses Exolytic cleavage of the (1-&gt;4)-beta-glycosidic linkage between N-acetylmuramic acid (MurNAc) and N-acetylglucosamine (GlcNAc) residues in peptidoglycan, from either the reducing or the non-reducing ends of the peptidoglycan chains, with concomitant formation of a 1,6-anhydrobond in the MurNAc residue.. In terms of biological role, murein-degrading enzyme. May play a role in recycling of muropeptides during cell elongation and/or cell division. The chain is Membrane-bound lytic murein transglycosylase C from Cronobacter sakazakii (strain ATCC BAA-894) (Enterobacter sakazakii).